A 452-amino-acid chain; its full sequence is Tylactone mycaminosyltransferase (452 aa).

Residues methionine 1–glutamate 16 show a composition bias toward basic and acidic residues. The disordered stretch occupies residues methionine 1–proline 20.

It belongs to the glycosyltransferase 28 family.

It carries out the reaction tylactone + dTDP-alpha-D-mycaminose = 5-O-beta-D-mycaminosyltylactone + dTDP + H(+). It participates in antibiotic biosynthesis; tylosin biosynthesis. Its activity is regulated as follows. The activity of TylM2 is substantially increased by the addition of the accessory protein TylM3. Its function is as follows. Involved in the biosynthesis of the macrolide antibiotic tylosin derived from the polyketide lactone tylactone. Catalyzes the transfer of alpha-D-mycaminosyl from dTDP-alpha-D-mycaminose to the 5-hydroxyl group of tylactone to yield 5-O-mycaminosytylactone. It can also accept 16-membered tylactone and 12-membered ring macrolide. The protein is Tylactone mycaminosyltransferase of Streptomyces fradiae (Streptomyces roseoflavus).